Here is a 301-residue protein sequence, read N- to C-terminus: D-alanine--D-alanine ligase (301 aa).

The region spanning 101–296 (KLMWRAAGLA…YPTLVRRVLE (196 aa)) is the ATP-grasp domain. 127–182 (EEELGLPLFVKPAREGSSIGVTKVKERGALKAAYEEAARHDPLVIAEKGVMGGEYT) serves as a coordination point for ATP. Mg(2+)-binding residues include D250, E263, and N265.

This sequence belongs to the D-alanine--D-alanine ligase family. Mg(2+) serves as cofactor. Requires Mn(2+) as cofactor.

The protein resides in the cytoplasm. It catalyses the reaction 2 D-alanine + ATP = D-alanyl-D-alanine + ADP + phosphate + H(+). It participates in cell wall biogenesis; peptidoglycan biosynthesis. In terms of biological role, cell wall formation. The polypeptide is D-alanine--D-alanine ligase (Dechloromonas aromatica (strain RCB)).